A 235-amino-acid polypeptide reads, in one-letter code: Sugar fermentation stimulation protein homolog (235 aa).

The protein belongs to the SfsA family.

This is Sugar fermentation stimulation protein homolog from Maricaulis maris (strain MCS10) (Caulobacter maris).